The sequence spans 790 residues: PGC-1 and ERR-induced regulator in muscle protein 1 (790 aa).

4 disordered regions span residues 38 to 391 (LLSS…TPIS), 425 to 449 (VASSPPVSEAVPRMTESSGLVSTPV), 507 to 545 (SVAGPSPNKPGSGQASARPSAPQTATGAHGGPGAWEAVA), and 626 to 648 (QRSRRRGSPEPLPRADPVPAPIP). The segment covering 40–52 (SSDIDQGDSSGSS) has biased composition (low complexity). Composition is skewed to polar residues over residues 80–89 (ATQQPVSRSQ) and 98–107 (TGQQTPSTSA). Low complexity predominate over residues 111–123 (APPSLGPGASPPS). The span at 146–157 (APRPPGEPPGSP) shows a compositional bias: pro residues. Low complexity predominate over residues 158-169 (KSPGHSTGSQRP). The span at 170 to 179 (PDSPGAPPRS) shows a compositional bias: pro residues. Over residues 366 to 391 (KPQSDTAVSTPASEPQSSVALSTPIS) the composition is skewed to polar residues. Over residues 515-532 (KPGSGQASARPSAPQTAT) the composition is skewed to polar residues. Residues 635–648 (EPLPRADPVPAPIP) show a composition bias toward pro residues.

Muscle-specific expression is increased by endurance exercise.

It localises to the cytoplasm. The protein localises to the nucleus. Its function is as follows. Regulates the expression of selective PPARGC1A/B and ESRRA/B/G target genes with roles in glucose and lipid metabolism, energy transfer, contractile function, muscle mitochondrial biogenesis and oxidative capacity. Required for the efficient induction of MT-CO2, MT-CO3, COX4I1, TFB1M, TFB2M, POLRMT and SIRT3 by PPARGC1A. Positively regulates the PPARGC1A/ESRRG-induced expression of CKMT2, TNNI3 and SLC2A4 and negatively regulates the PPARGC1A/ESRRG-induced expression of PDK4. In Homo sapiens (Human), this protein is PGC-1 and ERR-induced regulator in muscle protein 1 (PERM1).